Consider the following 40-residue polypeptide: Photosystem II reaction center protein J (40 aa).

A helical transmembrane segment spans residues 8-28 (IPLWIIGTVTGILVIGLVGIF).

This sequence belongs to the PsbJ family. In terms of assembly, PSII is composed of 1 copy each of membrane proteins PsbA, PsbB, PsbC, PsbD, PsbE, PsbF, PsbH, PsbI, PsbJ, PsbK, PsbL, PsbM, PsbT, PsbX, PsbY, PsbZ, Psb30/Ycf12, at least 3 peripheral proteins of the oxygen-evolving complex and a large number of cofactors. It forms dimeric complexes.

Its subcellular location is the plastid. The protein resides in the chloroplast thylakoid membrane. Its function is as follows. One of the components of the core complex of photosystem II (PSII). PSII is a light-driven water:plastoquinone oxidoreductase that uses light energy to abstract electrons from H(2)O, generating O(2) and a proton gradient subsequently used for ATP formation. It consists of a core antenna complex that captures photons, and an electron transfer chain that converts photonic excitation into a charge separation. The protein is Photosystem II reaction center protein J of Jasminum nudiflorum (Winter jasmine).